The following is a 220-amino-acid chain: Deoxyribose-phosphate aldolase (220 aa).

Residue aspartate 89 is the Proton donor/acceptor of the active site. Lysine 151 serves as the catalytic Schiff-base intermediate with acetaldehyde. Residue lysine 180 is the Proton donor/acceptor of the active site.

It belongs to the DeoC/FbaB aldolase family. DeoC type 1 subfamily.

It localises to the cytoplasm. It catalyses the reaction 2-deoxy-D-ribose 5-phosphate = D-glyceraldehyde 3-phosphate + acetaldehyde. The protein operates within carbohydrate degradation; 2-deoxy-D-ribose 1-phosphate degradation; D-glyceraldehyde 3-phosphate and acetaldehyde from 2-deoxy-alpha-D-ribose 1-phosphate: step 2/2. In terms of biological role, catalyzes a reversible aldol reaction between acetaldehyde and D-glyceraldehyde 3-phosphate to generate 2-deoxy-D-ribose 5-phosphate. This chain is Deoxyribose-phosphate aldolase, found in Thermus thermophilus (strain ATCC BAA-163 / DSM 7039 / HB27).